The following is a 422-amino-acid chain: Glutamate-1-semialdehyde 2,1-aminomutase (422 aa).

Lys258 is modified (N6-(pyridoxal phosphate)lysine).

This sequence belongs to the class-III pyridoxal-phosphate-dependent aminotransferase family. HemL subfamily. In terms of assembly, homodimer. Requires pyridoxal 5'-phosphate as cofactor.

The protein localises to the cytoplasm. The catalysed reaction is (S)-4-amino-5-oxopentanoate = 5-aminolevulinate. It participates in porphyrin-containing compound metabolism; protoporphyrin-IX biosynthesis; 5-aminolevulinate from L-glutamyl-tRNA(Glu): step 2/2. In Chlamydia trachomatis serovar L2 (strain ATCC VR-902B / DSM 19102 / 434/Bu), this protein is Glutamate-1-semialdehyde 2,1-aminomutase.